The following is a 218-amino-acid chain: Small ribosomal subunit protein uS3 (218 aa).

In terms of domain architecture, KH type-2 spans 38-106 (IREYISKRLS…RVHINILEIK (69 aa)).

It belongs to the universal ribosomal protein uS3 family. In terms of assembly, part of the 30S ribosomal subunit. Forms a tight complex with proteins S10 and S14.

Its function is as follows. Binds the lower part of the 30S subunit head. Binds mRNA in the 70S ribosome, positioning it for translation. The chain is Small ribosomal subunit protein uS3 from Bacillus subtilis (strain 168).